We begin with the raw amino-acid sequence, 280 residues long: MGILGKIKNKLKSIGKRVIIDFYRFLDNSGVLKIYEKILEEAIDKDNLPKHVAIIMDGNRRAAEIYGKDRYYGHYLGAEKVREVLRWARDLGINVVTLYAFSTENFRRPKEEVDKLMELFEKKFYEIADDEEIHRYEVRVRAIGRINLLPKNVQKAIKYAEERTKNYNKFFVNIAIAYGGQQEIIDAVKKIAEKVKRGEIEPEDIDKELIDKHLYTANLPFPNPDLIIRTSGEERISNFLIWQSSYSELYFCDIYWPLFRRVDFLRAVRDYQRRQRRFGK.

The active site involves aspartate 57. Mg(2+) is bound at residue aspartate 57. Residues 58 to 61 (GNRR), arginine 70, histidine 74, and 102 to 104 (STE) each bind substrate. Asparagine 105 acts as the Proton acceptor in catalysis. Substrate is bound by residues phenylalanine 106, arginine 108, arginine 229, and 235-237 (RIS). Mg(2+) is bound at residue glutamate 248.

It belongs to the UPP synthase family. In terms of assembly, homodimer. Mg(2+) serves as cofactor.

The catalysed reaction is geranylgeranyl diphosphate + 7 isopentenyl diphosphate = tri-trans,hepta-cis-undecaprenyl diphosphate + 7 diphosphate. In terms of biological role, catalyzes the sequential condensation of isopentenyl diphosphate (IPP) with geranylgeranyl diphosphate (GGPP) to yield (2Z,6Z,10Z,14Z,18Z,22Z,26Z,30E,34E,38E)-undecaprenyl diphosphate (tritrans,heptacis-UPP). It is probably the precursor of glycosyl carrier lipids. The polypeptide is Tritrans,polycis-undecaprenyl-diphosphate synthase (geranylgeranyl-diphosphate specific) (Methanocaldococcus jannaschii (strain ATCC 43067 / DSM 2661 / JAL-1 / JCM 10045 / NBRC 100440) (Methanococcus jannaschii)).